A 331-amino-acid chain; its full sequence is Retinol dehydrogenase 13 (331 aa).

Ser2 bears the N-acetylserine mark. Gly45 to Gly51 contacts NADP(+). Residue Ser174 participates in substrate binding. Tyr200 (proton acceptor) is an active-site residue. Phosphoserine is present on Ser323.

It belongs to the short-chain dehydrogenases/reductases (SDR) family. In terms of tissue distribution, widely expressed. In the retina, detected in the inner segment of the photoreceptor cells. Weak signals are observed in a small population of inner nuclear neurons and the inner plexiform layer.

The protein localises to the mitochondrion inner membrane. It catalyses the reaction all-trans-retinol + NADP(+) = all-trans-retinal + NADPH + H(+). Its pathway is cofactor metabolism; retinol metabolism. Retinol dehydrogenase with a clear preference for NADP. Oxidizes all-trans-retinol, but seems to reduce all-trans-retinal with much higher efficiency. Has no activity toward steroids. In Homo sapiens (Human), this protein is Retinol dehydrogenase 13 (RDH13).